The following is a 344-amino-acid chain: Phenylalanine--tRNA ligase alpha subunit (344 aa).

Mg(2+) is bound at residue Glu-257.

This sequence belongs to the class-II aminoacyl-tRNA synthetase family. Phe-tRNA synthetase alpha subunit type 1 subfamily. As to quaternary structure, tetramer of two alpha and two beta subunits. The cofactor is Mg(2+).

Its subcellular location is the cytoplasm. The enzyme catalyses tRNA(Phe) + L-phenylalanine + ATP = L-phenylalanyl-tRNA(Phe) + AMP + diphosphate + H(+). The protein is Phenylalanine--tRNA ligase alpha subunit of Chlorobium chlorochromatii (strain CaD3).